Consider the following 72-residue polypeptide: Late effector protein 1 (72 aa).

Positions 1-22 (MKCYLVVVVAALCTLVAQGSVG) are cleaved as a signal peptide. The N-linked (GlcNAc...) asparagine glycan is linked to Asn-66.

It belongs to the lep1 family. Interacts at the cell wall with secreted rep1 repellent peptides.

It localises to the secreted. The protein localises to the cell wall. In terms of biological role, core effector contributing to spore formation and tumor formation at the host plant. Modulates surface hydrophobicity promoting cell-cell or cell-surface contacts. Lep1 and rep1 interact in aerial hyphae to form a strong hydrophobic layer. Plays a crucial role in hyphal aggregation that might be a prerequisite for strong proliferation of diploid cells and for induction of the morphological changes associated with spore formation. The chain is Late effector protein 1 from Sporisorium reilianum (strain SRZ2) (Maize head smut fungus).